The chain runs to 507 residues: ATP synthase subunit alpha (507 aa).

ATP is bound at residue 169–176; that stretch reads GDRQIGKT.

The protein belongs to the ATPase alpha/beta chains family. As to quaternary structure, F-type ATPases have 2 components, CF(1) - the catalytic core - and CF(0) - the membrane proton channel. CF(1) has five subunits: alpha(3), beta(3), gamma(1), delta(1), epsilon(1). CF(0) has three main subunits: a(1), b(2) and c(9-12). The alpha and beta chains form an alternating ring which encloses part of the gamma chain. CF(1) is attached to CF(0) by a central stalk formed by the gamma and epsilon chains, while a peripheral stalk is formed by the delta and b chains.

Its subcellular location is the cell inner membrane. The enzyme catalyses ATP + H2O + 4 H(+)(in) = ADP + phosphate + 5 H(+)(out). In terms of biological role, produces ATP from ADP in the presence of a proton gradient across the membrane. The alpha chain is a regulatory subunit. The protein is ATP synthase subunit alpha of Desulfotalea psychrophila (strain LSv54 / DSM 12343).